Here is a 746-residue protein sequence, read N- to C-terminus: MSSRALPAVPFLLLSSCLLANAVHAAGQGDGSVIELGEQTVVATAQEETKQAPGVSIITAEDIAKRPPSNDLSQIIRTMPGVNLTGNSSSGQRGNNRQIDIRGMGPENTLILVDGKPVSSRNSVRYGWRGERDSRGDTNWVPADQVERIEVIRGPAAARYGNGAAGGVVNIITKQAGAETHGNLSVYSNFPQHKAEGASERMSFGLNGPLTENLSYRVYGNIAKTDSDDWDINAGHESNRTGKQAGTLPAGREGVRNKDIDGLLSWRLTPEQTLEFEAGFSRQGNIYTGDTQNTNSNNYVKQMLGHETNRMYRETYSVTHRGEWDFGSSLAYLQYEKTRNSRINEGLAGGTEGIFDPNNAGFYTATLRDLTAHGEVNLPLHLGYEQTLTLGSEWTEQKLDDPSSNTQNTEEGGSIPGLAGKNRSSSSSARIFSLFAEDNIELMPGTMLTPGLRWDHHDIVGDNWSPSLNLSHALTERVTLKAGIARAYKAPNLYQLNPDYLLYSRGQGCYGQSTSCYLRGNDGLKAETSVNKELGIEYSHDGLVAGLTYFRNDYKNKIESGLSPVDHASGGKGDYANAAIYQWENVPKAVVEGLEGTLTLPLADGLKWSNNLTYMLQSKNKETGDVLSVTPRYTLNSMLDWQATDDLSLQATVTWYGKQKPKKYDYHGDRVTGSANDQLSPYAIAGLGGTYRLSKNLSLGAGVDNLFDKRLFRAGNAQGVVGIDGAGAATYNEPGRTFYTSLTASF.

An N-terminal signal peptide occupies residues 1 to 25 (MSSRALPAVPFLLLSSCLLANAVHA). Residues 39-44 (QTVVAT) carry the TonB box motif. The TBDR plug domain occupies 47-174 (EETKQAPGVS…AGGVVNIITK (128 aa)). 3 disordered regions span residues 82–102 (VNLTGNSSSGQRGNNRQIDIR), 235–254 (GHESNRTGKQAGTLPAGREG), and 397–424 (QKLDDPSSNTQNTEEGGSIPGLAGKNRS). The segment covering 84–98 (LTGNSSSGQRGNNRQ) has biased composition (polar residues). A TBDR beta-barrel domain is found at 179–746 (ETHGNLSVYS…TFYTSLTASF (568 aa)). Residues 402 to 411 (PSSNTQNTEE) show a composition bias toward polar residues. The TonB C-terminal box motif lies at 729 to 746 (ATYNEPGRTFYTSLTASF).

This sequence belongs to the TonB-dependent receptor family.

It is found in the cell outer membrane. In terms of biological role, specific receptor for the siderophore ferric enterobactin. This chain is Ferric enterobactin receptor (pfeA), found in Pseudomonas aeruginosa (strain ATCC 15692 / DSM 22644 / CIP 104116 / JCM 14847 / LMG 12228 / 1C / PRS 101 / PAO1).